Reading from the N-terminus, the 166-residue chain is MKFWLQGCAFVGCLLLTLPCCAARRRASGENLQQTRPIAAANLQWESYAEALEHSKQDHKPICLFFTGSDWCMWCIKMQDQILQSSEFKHFAGVHLHMVEVDFPQKNHQPEEQRQKNQELKAQYKVTGFPELVFIDAEGKQLARMGFEPGGGAAYVSKVKSALKLR.

The signal sequence occupies residues 1-22 (MKFWLQGCAFVGCLLLTLPCCA). The region spanning 32–166 (LQQTRPIAAA…SKVKSALKLR (135 aa)) is the Thioredoxin domain. Cys72 and Cys75 are joined by a disulfide. 73 to 74 (MW) contributes to the substrate binding site.

In terms of assembly, monomer.

It localises to the periplasm. Catalyzes the reduction of disulfide bonds. May function in reducing intermolecular disulfides between proteins and small molecules in the periplasm, or keeping a specific subset of periplasmic proteins reduced, or maintaining the periplasm of Chlamydia in a generally reducing state. Seems to be unable to oxidize thiols into disulfides and does not display disulfide bond isomerase activity. The protein is Disulfide bond reductase DsbH (dsbH) of Chlamydia pneumoniae (Chlamydophila pneumoniae).